The sequence spans 427 residues: Enolase (427 aa).

Glutamine 163 provides a ligand contact to (2R)-2-phosphoglycerate. Glutamate 205 serves as the catalytic Proton donor. Positions 242, 285, and 312 each coordinate Mg(2+). (2R)-2-phosphoglycerate contacts are provided by lysine 337, arginine 366, serine 367, and lysine 388. Catalysis depends on lysine 337, which acts as the Proton acceptor.

It belongs to the enolase family. Mg(2+) is required as a cofactor.

Its subcellular location is the cytoplasm. The protein localises to the secreted. The protein resides in the cell surface. The enzyme catalyses (2R)-2-phosphoglycerate = phosphoenolpyruvate + H2O. It participates in carbohydrate degradation; glycolysis; pyruvate from D-glyceraldehyde 3-phosphate: step 4/5. Functionally, catalyzes the reversible conversion of 2-phosphoglycerate (2-PG) into phosphoenolpyruvate (PEP). It is essential for the degradation of carbohydrates via glycolysis. This Rhodopseudomonas palustris (strain HaA2) protein is Enolase.